A 387-amino-acid chain; its full sequence is Galactokinase (387 aa).

Glu33 to Asp36 is a binding site for substrate. ATP is bound by residues Ser67 and Gly124–Ser130. Mg(2+) contacts are provided by Ser130 and Glu162. Asp174 serves as the catalytic Proton acceptor. Tyr224 lines the substrate pocket.

It belongs to the GHMP kinase family. GalK subfamily.

The protein localises to the cytoplasm. It catalyses the reaction alpha-D-galactose + ATP = alpha-D-galactose 1-phosphate + ADP + H(+). It participates in carbohydrate metabolism; galactose metabolism. Catalyzes the transfer of the gamma-phosphate of ATP to D-galactose to form alpha-D-galactose-1-phosphate (Gal-1-P). This Clostridium perfringens (strain SM101 / Type A) protein is Galactokinase.